The primary structure comprises 151 residues: MFRGANAINLDAKGRLAMPSRYRDELDSRSAGQLIVTIDAVDPCLCLYPLSEWELIEAKLRDLATFREENRRLQRLLIGNAVDLELDGSGRFLVPPRLREYARLDKRVMLVGQLNKFQLWDEDAWNALADADLAAIQKPGAMPDELRDLIL.

2 SpoVT-AbrB domains span residues 5-52 (ANAI…PLSE) and 81-124 (AVDL…DEDA).

The protein belongs to the MraZ family. In terms of assembly, forms oligomers.

The protein localises to the cytoplasm. It localises to the nucleoid. The sequence is that of Transcriptional regulator MraZ from Pseudomonas savastanoi pv. phaseolicola (strain 1448A / Race 6) (Pseudomonas syringae pv. phaseolicola (strain 1448A / Race 6)).